The sequence spans 178 residues: Fatty-acid and retinol-binding protein 1 (178 aa).

The first 16 residues, 1 to 16 (MYHQLILMALIGVIMA), serve as a signal peptide directing secretion. Coiled-coil stretches lie at residues 67–89 (DAAL…ELRN) and 122–154 (QKLD…LKAT).

The protein belongs to the fatty-acid and retinol-binding protein (FARBP) family. Not glycosylated.

The protein resides in the secreted. Binds retinol and different fatty acids. In Litomosoides sigmodontis (Filarial nematode worm), this protein is Fatty-acid and retinol-binding protein 1.